A 124-amino-acid chain; its full sequence is Small ribosomal subunit protein uS12 (124 aa).

Asp89 carries the 3-methylthioaspartic acid modification. The disordered stretch occupies residues 104 to 124; sequence ALGVEDRKRGRSKYGAKRPKA. Positions 112-124 are enriched in basic residues; it reads RGRSKYGAKRPKA.

This sequence belongs to the universal ribosomal protein uS12 family. Part of the 30S ribosomal subunit. Contacts proteins S8 and S17. May interact with IF1 in the 30S initiation complex.

In terms of biological role, with S4 and S5 plays an important role in translational accuracy. Interacts with and stabilizes bases of the 16S rRNA that are involved in tRNA selection in the A site and with the mRNA backbone. Located at the interface of the 30S and 50S subunits, it traverses the body of the 30S subunit contacting proteins on the other side and probably holding the rRNA structure together. The combined cluster of proteins S8, S12 and S17 appears to hold together the shoulder and platform of the 30S subunit. This is Small ribosomal subunit protein uS12 from Treponema denticola (strain ATCC 35405 / DSM 14222 / CIP 103919 / JCM 8153 / KCTC 15104).